The primary structure comprises 945 residues: Isoleucine--tRNA ligase (945 aa).

The short motif at 66 to 76 (PYANGDIHLGH) is the 'HIGH' region element. L-isoleucyl-5'-AMP is bound at residue E581. Positions 622 to 626 (KMSKS) match the 'KMSKS' region motif. Residue K625 coordinates ATP. The Zn(2+) site is built by C908, C911, C928, and C931.

The protein belongs to the class-I aminoacyl-tRNA synthetase family. IleS type 1 subfamily. Monomer. The cofactor is Zn(2+).

It localises to the cytoplasm. It carries out the reaction tRNA(Ile) + L-isoleucine + ATP = L-isoleucyl-tRNA(Ile) + AMP + diphosphate. Its function is as follows. Catalyzes the attachment of isoleucine to tRNA(Ile). As IleRS can inadvertently accommodate and process structurally similar amino acids such as valine, to avoid such errors it has two additional distinct tRNA(Ile)-dependent editing activities. One activity is designated as 'pretransfer' editing and involves the hydrolysis of activated Val-AMP. The other activity is designated 'posttransfer' editing and involves deacylation of mischarged Val-tRNA(Ile). In Burkholderia ambifaria (strain MC40-6), this protein is Isoleucine--tRNA ligase.